The chain runs to 267 residues: 4-hydroxy-tetrahydrodipicolinate reductase (267 aa).

NAD(+)-binding positions include 8–13 and Glu-34; that span reads GAAGRM. Arg-35 is a binding site for NADP(+). NAD(+) contacts are provided by residues 98–100 and 122–125; these read GST and APNM. His-155 acts as the Proton donor/acceptor in catalysis. His-156 serves as a coordination point for (S)-2,3,4,5-tetrahydrodipicolinate. Lys-159 acts as the Proton donor in catalysis. 165–166 provides a ligand contact to (S)-2,3,4,5-tetrahydrodipicolinate; that stretch reads GT.

This sequence belongs to the DapB family.

The protein localises to the cytoplasm. It carries out the reaction (S)-2,3,4,5-tetrahydrodipicolinate + NAD(+) + H2O = (2S,4S)-4-hydroxy-2,3,4,5-tetrahydrodipicolinate + NADH + H(+). It catalyses the reaction (S)-2,3,4,5-tetrahydrodipicolinate + NADP(+) + H2O = (2S,4S)-4-hydroxy-2,3,4,5-tetrahydrodipicolinate + NADPH + H(+). It functions in the pathway amino-acid biosynthesis; L-lysine biosynthesis via DAP pathway; (S)-tetrahydrodipicolinate from L-aspartate: step 4/4. Catalyzes the conversion of 4-hydroxy-tetrahydrodipicolinate (HTPA) to tetrahydrodipicolinate. The polypeptide is 4-hydroxy-tetrahydrodipicolinate reductase (Geotalea daltonii (strain DSM 22248 / JCM 15807 / FRC-32) (Geobacter daltonii)).